Consider the following 503-residue polypeptide: ATP synthase subunit alpha (503 aa).

Residue 169–176 (GDRGTGKT) coordinates ATP.

Belongs to the ATPase alpha/beta chains family. In terms of assembly, F-type ATPases have 2 components, CF(1) - the catalytic core - and CF(0) - the membrane proton channel. CF(1) has five subunits: alpha(3), beta(3), gamma(1), delta(1), epsilon(1). CF(0) has three main subunits: a(1), b(2) and c(9-12). The alpha and beta chains form an alternating ring which encloses part of the gamma chain. CF(1) is attached to CF(0) by a central stalk formed by the gamma and epsilon chains, while a peripheral stalk is formed by the delta and b chains.

It is found in the cell inner membrane. It carries out the reaction ATP + H2O + 4 H(+)(in) = ADP + phosphate + 5 H(+)(out). Its function is as follows. Produces ATP from ADP in the presence of a proton gradient across the membrane. The alpha chain is a regulatory subunit. This is ATP synthase subunit alpha from Leptospira borgpetersenii serovar Hardjo-bovis (strain L550).